The following is a 223-amino-acid chain: MTEAVAAEATETAPATDDRRGGRRGERGDRGQGRGDRGGRGGRDGGREAEKSQFVERVVTINRVAKVVKGGRRFSFTALVVVGDGNGMVGVGYGKAKEVPAAIAKGVEEAKKSFFRVPRVGSTIPHRVQGEAAAGVVLLRPASAGTGVIAGGPVRAVLECVGIHDILSKSLGSSNAINIVHATVAALKQLEEPASVAARRGLPLDEVAPAALVRALQNQKAGV.

A compositionally biased stretch (low complexity) spans 1–15 (MTEAVAAEATETAPA). The tract at residues 1-51 (MTEAVAAEATETAPATDDRRGGRRGERGDRGQGRGDRGGRGGRDGGREAEK) is disordered. Over residues 16-51 (TDDRRGGRRGERGDRGQGRGDRGGRGGRDGGREAEK) the composition is skewed to basic and acidic residues. Positions 54–117 (FVERVVTINR…EEAKKSFFRV (64 aa)) constitute an S5 DRBM domain.

This sequence belongs to the universal ribosomal protein uS5 family. As to quaternary structure, part of the 30S ribosomal subunit. Contacts proteins S4 and S8.

With S4 and S12 plays an important role in translational accuracy. Functionally, located at the back of the 30S subunit body where it stabilizes the conformation of the head with respect to the body. In Paenarthrobacter aurescens (strain TC1), this protein is Small ribosomal subunit protein uS5.